The sequence spans 105 residues: NADH dehydrogenase [ubiquinone] 1 beta subcomplex subunit 2, mitochondrial (105 aa).

A mitochondrion-targeting transit peptide spans 1 to 33 (MSDLTRLASFARVGGRLFRSGRARTAGDGGVRH). The segment at 85 to 105 (PYPDPSQWTDEELGIPPDDED) is disordered. A compositionally biased stretch (acidic residues) spans 93–105 (TDEELGIPPDDED).

It belongs to the complex I NDUFB2 subunit family. Complex I is composed of 45 different subunits.

It localises to the mitochondrion inner membrane. Functionally, accessory subunit of the mitochondrial membrane respiratory chain NADH dehydrogenase (Complex I), that is believed not to be involved in catalysis. Complex I functions in the transfer of electrons from NADH to the respiratory chain. The immediate electron acceptor for the enzyme is believed to be ubiquinone. This chain is NADH dehydrogenase [ubiquinone] 1 beta subcomplex subunit 2, mitochondrial (NDUFB2), found in Pan troglodytes (Chimpanzee).